We begin with the raw amino-acid sequence, 604 residues long: Uptake hydrogenase large subunit (604 aa).

Residues C76, C79, C583, and C586 each contribute to the Ni(2+) site.

This sequence belongs to the [NiFe]/[NiFeSe] hydrogenase large subunit family. As to quaternary structure, heterodimer of a large and a small subunit. Requires Ni(2+) as cofactor.

The protein localises to the cell membrane. It carries out the reaction H2 + A = AH2. Its function is as follows. This enzyme recycles the H(2) produced by nitrogenase to increase the production of ATP and to protect nitrogenase against inhibition or damage by O(2) under carbon- or phosphate-limited conditions. In Afipia carboxidovorans (strain ATCC 49405 / DSM 1227 / KCTC 32145 / OM5) (Oligotropha carboxidovorans), this protein is Uptake hydrogenase large subunit (hoxL).